Reading from the N-terminus, the 345-residue chain is Probable dual-specificity RNA methyltransferase RlmN (345 aa).

Residue glutamate 90 is the Proton acceptor of the active site. A Radical SAM core domain is found at 96–326 (YDYGNSICIS…STIRKEMGAD (231 aa)). Cysteines 103 and 331 form a disulfide. Positions 110, 114, and 117 each coordinate [4Fe-4S] cluster. S-adenosyl-L-methionine is bound by residues 157–158 (GE), serine 189, 212–214 (SLH), and asparagine 288. Cysteine 331 (S-methylcysteine intermediate) is an active-site residue.

Belongs to the radical SAM superfamily. RlmN family. It depends on [4Fe-4S] cluster as a cofactor.

The protein resides in the cytoplasm. The enzyme catalyses adenosine(2503) in 23S rRNA + 2 reduced [2Fe-2S]-[ferredoxin] + 2 S-adenosyl-L-methionine = 2-methyladenosine(2503) in 23S rRNA + 5'-deoxyadenosine + L-methionine + 2 oxidized [2Fe-2S]-[ferredoxin] + S-adenosyl-L-homocysteine. The catalysed reaction is adenosine(37) in tRNA + 2 reduced [2Fe-2S]-[ferredoxin] + 2 S-adenosyl-L-methionine = 2-methyladenosine(37) in tRNA + 5'-deoxyadenosine + L-methionine + 2 oxidized [2Fe-2S]-[ferredoxin] + S-adenosyl-L-homocysteine. Functionally, specifically methylates position 2 of adenine 2503 in 23S rRNA and position 2 of adenine 37 in tRNAs. The polypeptide is Probable dual-specificity RNA methyltransferase RlmN (Clostridium acetobutylicum (strain ATCC 824 / DSM 792 / JCM 1419 / IAM 19013 / LMG 5710 / NBRC 13948 / NRRL B-527 / VKM B-1787 / 2291 / W)).